A 534-amino-acid chain; its full sequence is Dual specificity calcium/calmodulin-dependent 3',5'-cyclic nucleotide phosphodiesterase 1B (534 aa).

Residues 1–21 (MELSPRSPPEMLESDCPSPLE) are disordered. Phosphoserine occurs at positions 7 and 14. 2 calmodulin-binding regions span residues 27-47 (SKKMWIKLRSLLRYMVKQLEN) and 116-139 (EKPKFRSIVHAVQAGIFVERMFRR). Positions 144 to 501 (VGPTYSTAVL…QKWKERAASG (358 aa)) constitute a PDEase domain. The Proton donor role is filled by H221. Zn(2+) is bound by residues H225, H261, D262, and D368. Residue D262 participates in Mg(2+) binding. 2 disordered regions span residues 442 to 473 (VQPTGDDDSKSKNQPSFQWRQPSLDVEVGDPN) and 494 to 534 (WKER…GNLD). The span at 453 to 462 (KNQPSFQWRQ) shows a compositional bias: polar residues. Phosphoserine is present on residues S464 and S512.

This sequence belongs to the cyclic nucleotide phosphodiesterase family. PDE1 subfamily. In terms of assembly, homodimer. The cofactor is Zn(2+). Requires Mg(2+) as cofactor. Expressed in central nervous system regions. Most abundant in basal ganglia. Also found in kidney papilla and adrenal medulla.

The protein localises to the cytoplasm. Its subcellular location is the cytosol. The enzyme catalyses a nucleoside 3',5'-cyclic phosphate + H2O = a nucleoside 5'-phosphate + H(+). It catalyses the reaction 3',5'-cyclic GMP + H2O = GMP + H(+). It carries out the reaction 3',5'-cyclic AMP + H2O = AMP + H(+). Type I PDE are activated by the binding of calmodulin in the presence of Ca(2+). Functionally, cyclic nucleotide phosphodiesterase with a dual specificity for the second messengers cAMP and cGMP, which are key regulators of many important physiological processes. Has a preference for cGMP as a substrate. This is Dual specificity calcium/calmodulin-dependent 3',5'-cyclic nucleotide phosphodiesterase 1B from Bos taurus (Bovine).